Consider the following 191-residue polypeptide: Penicillin-binding protein activator LpoB (191 aa).

Residues 1-16 (MKRYLSLALAALVLTG) form the signal peptide. Residue C17 is the site of N-palmitoyl cysteine attachment. The S-diacylglycerol cysteine moiety is linked to residue C17.

Belongs to the LpoB family. As to quaternary structure, interacts with PBP1b.

The protein resides in the cell outer membrane. Regulator of peptidoglycan synthesis that is essential for the function of penicillin-binding protein 1B (PBP1b). The polypeptide is Penicillin-binding protein activator LpoB (Yersinia pestis (strain D182038)).